Consider the following 437-residue polypeptide: Glutamyl-tRNA reductase (437 aa).

Substrate-binding positions include 49–52, Ser109, 114–116, and Gln120; these read TCNR and EGQ. Residue Cys50 is the Nucleophile of the active site. Residue 198 to 203 coordinates NADP(+); it reads GAGRMS.

Belongs to the glutamyl-tRNA reductase family. In terms of assembly, homodimer.

It carries out the reaction (S)-4-amino-5-oxopentanoate + tRNA(Glu) + NADP(+) = L-glutamyl-tRNA(Glu) + NADPH + H(+). The protein operates within porphyrin-containing compound metabolism; protoporphyrin-IX biosynthesis; 5-aminolevulinate from L-glutamyl-tRNA(Glu): step 1/2. It functions in the pathway porphyrin-containing compound metabolism; chlorophyll biosynthesis. In terms of biological role, catalyzes the NADPH-dependent reduction of glutamyl-tRNA(Glu) to glutamate 1-semialdehyde (GSA). The sequence is that of Glutamyl-tRNA reductase from Synechococcus sp. (strain CC9311).